The following is a 37-amino-acid chain: Large ribosomal subunit protein bL36 (37 aa).

Belongs to the bacterial ribosomal protein bL36 family.

The protein is Large ribosomal subunit protein bL36 of Acetivibrio thermocellus (strain ATCC 27405 / DSM 1237 / JCM 9322 / NBRC 103400 / NCIMB 10682 / NRRL B-4536 / VPI 7372) (Clostridium thermocellum).